A 251-amino-acid polypeptide reads, in one-letter code: Indole-3-glycerol phosphate synthase (251 aa).

Over residues 1–12 (MDDSSSLASPVQ) the composition is skewed to polar residues. The interval 1 to 27 (MDDSSSLASPVQSILAAARRRDPPTRR) is disordered.

This sequence belongs to the TrpC family.

The enzyme catalyses 1-(2-carboxyphenylamino)-1-deoxy-D-ribulose 5-phosphate + H(+) = (1S,2R)-1-C-(indol-3-yl)glycerol 3-phosphate + CO2 + H2O. It participates in amino-acid biosynthesis; L-tryptophan biosynthesis; L-tryptophan from chorismate: step 4/5. In Halobacterium salinarum (strain ATCC 700922 / JCM 11081 / NRC-1) (Halobacterium halobium), this protein is Indole-3-glycerol phosphate synthase.